The following is a 269-amino-acid chain: Formamidopyrimidine-DNA glycosylase (269 aa).

The active-site Schiff-base intermediate with DNA is Pro-2. Catalysis depends on Glu-3, which acts as the Proton donor. Lys-57 functions as the Proton donor; for beta-elimination activity in the catalytic mechanism. Positions 90, 109, and 150 each coordinate DNA. The FPG-type zinc-finger motif lies at 235 to 269 (QVYGRKGEPCRVCGTPIVATKHAQRATFYCRHCQK). The Proton donor; for delta-elimination activity role is filled by Arg-259.

Belongs to the FPG family. In terms of assembly, monomer. Zn(2+) serves as cofactor.

The catalysed reaction is Hydrolysis of DNA containing ring-opened 7-methylguanine residues, releasing 2,6-diamino-4-hydroxy-5-(N-methyl)formamidopyrimidine.. It carries out the reaction 2'-deoxyribonucleotide-(2'-deoxyribose 5'-phosphate)-2'-deoxyribonucleotide-DNA = a 3'-end 2'-deoxyribonucleotide-(2,3-dehydro-2,3-deoxyribose 5'-phosphate)-DNA + a 5'-end 5'-phospho-2'-deoxyribonucleoside-DNA + H(+). Functionally, involved in base excision repair of DNA damaged by oxidation or by mutagenic agents. Acts as a DNA glycosylase that recognizes and removes damaged bases. Has a preference for oxidized purines, such as 7,8-dihydro-8-oxoguanine (8-oxoG). Has AP (apurinic/apyrimidinic) lyase activity and introduces nicks in the DNA strand. Cleaves the DNA backbone by beta-delta elimination to generate a single-strand break at the site of the removed base with both 3'- and 5'-phosphates. The protein is Formamidopyrimidine-DNA glycosylase of Salmonella agona (strain SL483).